A 146-amino-acid chain; its full sequence is MYNTDYKKYNVDIFHPAHFEDIQEESADCGPNVQEVRQFLESNRLEYALQSVLLNPPFGHSEQELKNRAVLLVAEVIHAFRQTDIEESVHKLSNENGDILMKYIYKAMQLCSDSATCLSLLLWHSQLVSKFGQGSIVRVLSNRQRL.

Belongs to the ARPC5 family. Component of the Arp2/3 complex composed of ARP2, ARP3, ARPC1B/p41-ARC, ARPC2/p34-ARC, ARPC3/p21-ARC, ARPC4/p20-ARC and ARPC5/p16-ARC.

The protein localises to the cytoplasm. It is found in the cytoskeleton. Functions as a component of the Arp2/3 complex which is involved in regulation of actin polymerization and together with an activating nucleation-promoting factor (NPF) mediates the formation of branched actin networks. The sequence is that of Probable actin-related protein 2/3 complex subunit 5 from Caenorhabditis elegans.